The following is a 92-amino-acid chain: Small ribosomal subunit protein uS19 (92 aa).

This sequence belongs to the universal ribosomal protein uS19 family.

Functionally, protein S19 forms a complex with S13 that binds strongly to the 16S ribosomal RNA. This is Small ribosomal subunit protein uS19 from Mesorhizobium japonicum (strain LMG 29417 / CECT 9101 / MAFF 303099) (Mesorhizobium loti (strain MAFF 303099)).